A 350-amino-acid chain; its full sequence is Biotin synthase (350 aa).

One can recognise a Radical SAM core domain in the interval 38–256 (NHVQVSTLLS…IAVARIMMPK (219 aa)). Cysteine 53, cysteine 57, and cysteine 60 together coordinate [4Fe-4S] cluster. The [2Fe-2S] cluster site is built by cysteine 97, cysteine 128, cysteine 188, and arginine 260.

This sequence belongs to the radical SAM superfamily. Biotin synthase family. In terms of assembly, homodimer. It depends on [4Fe-4S] cluster as a cofactor. [2Fe-2S] cluster is required as a cofactor.

It carries out the reaction (4R,5S)-dethiobiotin + (sulfur carrier)-SH + 2 reduced [2Fe-2S]-[ferredoxin] + 2 S-adenosyl-L-methionine = (sulfur carrier)-H + biotin + 2 5'-deoxyadenosine + 2 L-methionine + 2 oxidized [2Fe-2S]-[ferredoxin]. The protein operates within cofactor biosynthesis; biotin biosynthesis; biotin from 7,8-diaminononanoate: step 2/2. Its function is as follows. Catalyzes the conversion of dethiobiotin (DTB) to biotin by the insertion of a sulfur atom into dethiobiotin via a radical-based mechanism. This chain is Biotin synthase, found in Vibrio cholerae serotype O1 (strain ATCC 39541 / Classical Ogawa 395 / O395).